Consider the following 251-residue polypeptide: ATP synthase delta chain, chloroplastic (251 aa).

A chloroplast-targeting transit peptide spans 1–64 (MASLQHTTAS…STGGALGARM (64 aa)).

The protein belongs to the ATPase delta chain family. F-type ATPases have 2 components, CF(1) - the catalytic core - and CF(0) - the membrane proton channel. CF(1) has five subunits: alpha(3), beta(3), gamma(1), delta(1), epsilon(1). CF(0) has three main subunits: a, b and c.

It localises to the plastid. Its subcellular location is the chloroplast thylakoid membrane. Functionally, this protein seems to be part of the stalk that links CF(0) to CF(1). It either transmits conformational changes from CF(0) into CF(1) or is implicated in proton conduction. This Pisum sativum (Garden pea) protein is ATP synthase delta chain, chloroplastic (ATPD).